A 977-amino-acid chain; its full sequence is Disks large-associated protein 1 (977 aa).

2 disordered regions span residues 150 to 203 (TKSH…GWWS) and 349 to 371 (KAMGDEDSGDSDTSPKPSPKVAA). A phosphoserine mark is found at Ser169, Ser356, Ser359, Ser362, Ser366, Ser383, Ser412, Ser415, Ser419, Ser422, Ser431, Ser503, Ser510, and Ser562. Position 563 is a phosphothreonine (Thr563). 2 positions are modified to phosphoserine: Ser565 and Ser589. A Phosphothreonine modification is found at Thr590. Ser592 and Ser595 each carry phosphoserine. Interaction with DYL2 regions lie at residues 650–661 (LSIGIQVDDAEE) and 672–683 (SKFQSVGVQVEE). The interval 899–965 (WKQMDPLDKK…QNSATESAES (67 aa)) is disordered. 2 stretches are compositionally biased toward basic and acidic residues: residues 903-912 (DPLDKKERRA) and 928-943 (IRERSLESSQRQEARK). Ser932 carries the post-translational modification Phosphoserine. Polar residues predominate over residues 954–963 (VRQNSATESA). The short motif at 975–977 (TRL) is the PDZ-binding element.

This sequence belongs to the SAPAP family. Interacts with guanylate kinase-like domain of DLG1, DLG2, DLG3, DLG4 and AIP1. Interacts with the PDZ domain of SHANK1, SHANK2 and SHANK3. Found in a complex with DLG4 and SHANK1, SHANK2 or SHANK3. Found in a complex with DLG4 and BEGAIN. Interacts with DYL2 and LRFN1. Interacts with MPP2 (via the SH3-Guanylate kinase-like sub-module). In terms of processing, ubiquitinated by TRIM3; leading to proteasomal degradation. In terms of tissue distribution, expressed in brain.

The protein resides in the cell membrane. Its subcellular location is the postsynaptic density. It is found in the synapse. In terms of biological role, part of the postsynaptic scaffold in neuronal cells. This chain is Disks large-associated protein 1 (DLGAP1), found in Homo sapiens (Human).